Reading from the N-terminus, the 344-residue chain is Serine proteinase inhibitor 2 (344 aa).

This sequence belongs to the serpin family. Poxviruses subfamily.

The protein resides in the host cytoplasm. Functionally, viral serpin that inhibits both cysteine and serine proteinases involved in the regulation of host inflammatory and apoptosis processes. Major anti-apoptotic protein which inhibits both intrinsic and extrinsic pathways and strongly cleaves host CASP1 and CASP8 but is a rather poor inhibitor of host CASP3. Prevents the proteolytic activity of host interleukin-1-beta converting enzyme (ICE) and ICE-like enzymes. Can also block apoptosis through host tumor necrosis factor (TNF) receptor. The inhibition of host ICE is an example of a 'cross-class' interaction, in which a serpin inhibits a non-serine proteinase. Also inhibits granzyme B. The polypeptide is Serine proteinase inhibitor 2 (OPG199) (Cynomys gunnisoni (Gunnison's prairie dog)).